Reading from the N-terminus, the 508-residue chain is Aspartyl/glutamyl-tRNA(Asn/Gln) amidotransferase subunit B (508 aa).

This sequence belongs to the GatB/GatE family. GatB subfamily. Heterotrimer of A, B and C subunits.

The enzyme catalyses L-glutamyl-tRNA(Gln) + L-glutamine + ATP + H2O = L-glutaminyl-tRNA(Gln) + L-glutamate + ADP + phosphate + H(+). It catalyses the reaction L-aspartyl-tRNA(Asn) + L-glutamine + ATP + H2O = L-asparaginyl-tRNA(Asn) + L-glutamate + ADP + phosphate + 2 H(+). Allows the formation of correctly charged Asn-tRNA(Asn) or Gln-tRNA(Gln) through the transamidation of misacylated Asp-tRNA(Asn) or Glu-tRNA(Gln) in organisms which lack either or both of asparaginyl-tRNA or glutaminyl-tRNA synthetases. The reaction takes place in the presence of glutamine and ATP through an activated phospho-Asp-tRNA(Asn) or phospho-Glu-tRNA(Gln). The chain is Aspartyl/glutamyl-tRNA(Asn/Gln) amidotransferase subunit B from Salinibacter ruber (strain DSM 13855 / M31).